We begin with the raw amino-acid sequence, 78 residues long: Small ribosomal subunit protein bS18 (78 aa).

This sequence belongs to the bacterial ribosomal protein bS18 family. Part of the 30S ribosomal subunit. Forms a tight heterodimer with protein bS6.

Functionally, binds as a heterodimer with protein bS6 to the central domain of the 16S rRNA, where it helps stabilize the platform of the 30S subunit. The polypeptide is Small ribosomal subunit protein bS18 (Acidothermus cellulolyticus (strain ATCC 43068 / DSM 8971 / 11B)).